The chain runs to 345 residues: Probable fructokinase-3 (345 aa).

The protein belongs to the carbohydrate kinase PfkB family.

The catalysed reaction is D-fructose + ATP = D-fructose 6-phosphate + ADP + H(+). It functions in the pathway glycan biosynthesis; starch biosynthesis. Its function is as follows. May play an important role in maintaining the flux of carbon towards starch formation. This is Probable fructokinase-3 from Arabidopsis thaliana (Mouse-ear cress).